The chain runs to 445 residues: 3-phosphoshikimate 1-carboxyvinyltransferase (445 aa).

The interval 1–20 is disordered; the sequence is MSTSAAPTPLESRASGPLSG. The 3-phosphoshikimate site is built by K28, S29, and R33. Position 28 (K28) interacts with phosphoenolpyruvate. Phosphoenolpyruvate is bound by residues G101 and R129. 3-phosphoshikimate contacts are provided by S175, Q177, D328, and K355. A phosphoenolpyruvate-binding site is contributed by Q177. Catalysis depends on D328, which acts as the Proton acceptor. Phosphoenolpyruvate is bound by residues R359 and R402.

It belongs to the EPSP synthase family. In terms of assembly, monomer.

Its subcellular location is the cytoplasm. It catalyses the reaction 3-phosphoshikimate + phosphoenolpyruvate = 5-O-(1-carboxyvinyl)-3-phosphoshikimate + phosphate. It participates in metabolic intermediate biosynthesis; chorismate biosynthesis; chorismate from D-erythrose 4-phosphate and phosphoenolpyruvate: step 6/7. Its function is as follows. Catalyzes the transfer of the enolpyruvyl moiety of phosphoenolpyruvate (PEP) to the 5-hydroxyl of shikimate-3-phosphate (S3P) to produce enolpyruvyl shikimate-3-phosphate and inorganic phosphate. This is 3-phosphoshikimate 1-carboxyvinyltransferase from Bradyrhizobium sp. (strain ORS 278).